A 318-amino-acid chain; its full sequence is Homoserine kinase (318 aa).

97–107 provides a ligand contact to ATP; the sequence is PIGSGLGSSAC.

This sequence belongs to the GHMP kinase family. Homoserine kinase subfamily.

The protein resides in the cytoplasm. The enzyme catalyses L-homoserine + ATP = O-phospho-L-homoserine + ADP + H(+). The protein operates within amino-acid biosynthesis; L-threonine biosynthesis; L-threonine from L-aspartate: step 4/5. Catalyzes the ATP-dependent phosphorylation of L-homoserine to L-homoserine phosphate. The chain is Homoserine kinase from Aliivibrio salmonicida (strain LFI1238) (Vibrio salmonicida (strain LFI1238)).